The chain runs to 374 residues: Relaxin-3 receptor 2 (374 aa).

Residues 1–43 (MPTLNTSASPPTFFWANASGGSVLSADDAPMPVKFLALRLMVA) lie on the Extracellular side of the membrane. Residues Asn5 and Asn17 are each glycosylated (N-linked (GlcNAc...) asparagine). A helical membrane pass occupies residues 44 to 64 (LAYGLVGAIGLLGNLAVLWVL). Topologically, residues 65 to 78 (SNCARRAPGPPSDT) are cytoplasmic. Residues 79 to 99 (FVFNLALADLGLALTLPFWAA) form a helical membrane-spanning segment. Residues 100–116 (ESALDFHWPFGGALCKM) are Extracellular-facing. Cys114 and Cys191 are disulfide-bonded. Residues 117–137 (VLTATVLNVYASIFLITALSV) traverse the membrane as a helical segment. The Cytoplasmic segment spans residues 138-154 (ARYWVVAMAAGPGTHLS). A helical membrane pass occupies residues 155 to 175 (LFWARIATLAVWAAAALVTVP). Topologically, residues 176–209 (TAVFGVEGEVCGVRLCLLRFPSRYWLGAYQLQRV) are extracellular. Residues 210–230 (VLAFMVPLGVITTSYLLLLAF) form a helical membrane-spanning segment. Topologically, residues 231-249 (LQRRQRRRQDSRVVARSVR) are cytoplasmic. A helical membrane pass occupies residues 250–270 (ILVASFFLCWFPNHVVTLWGV). The Extracellular segment spans residues 271-281 (LVKFDLVPWNS). The helical transmembrane segment at 282–302 (TFYTIQTYVFPVTTCLAHSNS) threads the bilayer. Over 303–374 (CLNPVLYCLL…LTNLDRGTPG (72 aa)) the chain is Cytoplasmic.

It belongs to the G-protein coupled receptor 1 family. Expressed in a broader range of tissues including brain, kidney, testis, thymus, placenta, prostate, salivary gland, thyroid and colon.

It localises to the cell membrane. Its function is as follows. High affinity receptor for INSL5. Also acts as a receptor for RLN3/relaxin-3, as well as bradykinin and kallidin. Binding of the ligand inhibit cAMP accumulation. The polypeptide is Relaxin-3 receptor 2 (RXFP4) (Homo sapiens (Human)).